The following is a 156-amino-acid chain: Biotin carboxyl carrier protein of acetyl-CoA carboxylase (156 aa).

The 84-residue stretch at Pro73–Glu156 folds into the Biotinyl-binding domain. Lys122 is subject to N6-biotinyllysine.

Homodimer.

The protein operates within lipid metabolism; fatty acid biosynthesis. This protein is a component of the acetyl coenzyme A carboxylase complex; first, biotin carboxylase catalyzes the carboxylation of the carrier protein and then the transcarboxylase transfers the carboxyl group to form malonyl-CoA. The protein is Biotin carboxyl carrier protein of acetyl-CoA carboxylase (accB) of Escherichia coli O6:H1 (strain CFT073 / ATCC 700928 / UPEC).